The primary structure comprises 178 residues: Nascent polypeptide-associated complex subunit alpha (178 aa).

One can recognise an NAC-A/B domain in the interval 20-84 (SKNEKKAREL…AKVDDMNKRI (65 aa)). The span at 87–104 (AQAQQEQQEALTKAAADA) shows a compositional bias: low complexity. The interval 87-142 (AQAQQEQQEALTKAAADAETADKSPESITNDLQNASLEDKTVEEDEGEVDETGLDS) is disordered. The span at 112-122 (ESITNDLQNAS) shows a compositional bias: polar residues. Acidic residues predominate over residues 127 to 139 (TVEEDEGEVDETG). The 39-residue stretch at 140–178 (LDSKDIEIIVEQTQVSRAKAVKALRAHKGDMVNAIMELS) folds into the UBA domain.

The protein belongs to the NAC-alpha family. As to quaternary structure, part of the nascent polypeptide-associated complex (NAC), consisting of EGD2 and EGD1. NAC associates with ribosomes via EGD1.

Its subcellular location is the cytoplasm. The protein localises to the nucleus. Its function is as follows. Component of the nascent polypeptide-associated complex (NAC), a dynamic component of the ribosomal exit tunnel, protecting the emerging polypeptides from interaction with other cytoplasmic proteins to ensure appropriate nascent protein targeting. The NAC complex also promotes mitochondrial protein import by enhancing productive ribosome interactions with the outer mitochondrial membrane and blocks the inappropriate interaction of ribosomes translating non-secretory nascent polypeptides with translocation sites in the membrane of the endoplasmic reticulum. EGD2 may also be involved in transcription regulation. This is Nascent polypeptide-associated complex subunit alpha (EGD2) from Meyerozyma guilliermondii (strain ATCC 6260 / CBS 566 / DSM 6381 / JCM 1539 / NBRC 10279 / NRRL Y-324) (Yeast).